The chain runs to 291 residues: Lipoyl synthase (291 aa).

Positions 35, 40, 46, 61, 65, 68, and 273 each coordinate [4Fe-4S] cluster. One can recognise a Radical SAM core domain in the interval 47–262 (FGKRQATFLI…KERALTMGFE (216 aa)).

The protein belongs to the radical SAM superfamily. Lipoyl synthase family. It depends on [4Fe-4S] cluster as a cofactor.

It is found in the cytoplasm. The catalysed reaction is [[Fe-S] cluster scaffold protein carrying a second [4Fe-4S](2+) cluster] + N(6)-octanoyl-L-lysyl-[protein] + 2 oxidized [2Fe-2S]-[ferredoxin] + 2 S-adenosyl-L-methionine + 4 H(+) = [[Fe-S] cluster scaffold protein] + N(6)-[(R)-dihydrolipoyl]-L-lysyl-[protein] + 4 Fe(3+) + 2 hydrogen sulfide + 2 5'-deoxyadenosine + 2 L-methionine + 2 reduced [2Fe-2S]-[ferredoxin]. It functions in the pathway protein modification; protein lipoylation via endogenous pathway; protein N(6)-(lipoyl)lysine from octanoyl-[acyl-carrier-protein]: step 2/2. Catalyzes the radical-mediated insertion of two sulfur atoms into the C-6 and C-8 positions of the octanoyl moiety bound to the lipoyl domains of lipoate-dependent enzymes, thereby converting the octanoylated domains into lipoylated derivatives. This Citrifermentans bemidjiense (strain ATCC BAA-1014 / DSM 16622 / JCM 12645 / Bem) (Geobacter bemidjiensis) protein is Lipoyl synthase.